The chain runs to 795 residues: Phenylalanine--tRNA ligase beta subunit (795 aa).

Residues 39–148 (ADEFHTVVVG…ADAPVGEDYR (110 aa)) enclose the tRNA-binding domain. The B5 domain occupies 401–476 (PKRDGITLRA…RVYGYNSIQA (76 aa)). Residues aspartate 454, aspartate 460, glutamate 463, and glutamate 464 each contribute to the Mg(2+) site. One can recognise an FDX-ACB domain in the interval 701-794 (SRYPSIRRDL…LKSEFNATLR (94 aa)).

It belongs to the phenylalanyl-tRNA synthetase beta subunit family. Type 1 subfamily. As to quaternary structure, tetramer of two alpha and two beta subunits. The cofactor is Mg(2+).

It localises to the cytoplasm. It carries out the reaction tRNA(Phe) + L-phenylalanine + ATP = L-phenylalanyl-tRNA(Phe) + AMP + diphosphate + H(+). The protein is Phenylalanine--tRNA ligase beta subunit of Idiomarina loihiensis (strain ATCC BAA-735 / DSM 15497 / L2-TR).